A 427-amino-acid polypeptide reads, in one-letter code: Trigger factor (427 aa).

One can recognise a PPIase FKBP-type domain in the interval 163-248; the sequence is GDTVVIDFVG…VHEVKAKEVP (86 aa).

This sequence belongs to the FKBP-type PPIase family. Tig subfamily.

It is found in the cytoplasm. It carries out the reaction [protein]-peptidylproline (omega=180) = [protein]-peptidylproline (omega=0). In terms of biological role, involved in protein export. Acts as a chaperone by maintaining the newly synthesized protein in an open conformation. Functions as a peptidyl-prolyl cis-trans isomerase. The polypeptide is Trigger factor (Streptococcus equi subsp. equi (strain 4047)).